Here is a 459-residue protein sequence, read N- to C-terminus: ATP-dependent protease ATPase subunit HslU (459 aa).

ATP contacts are provided by residues valine 26, 68–73, aspartate 271, glutamate 337, and arginine 409; that span reads GVGKTE.

This sequence belongs to the ClpX chaperone family. HslU subfamily. A double ring-shaped homohexamer of HslV is capped on each side by a ring-shaped HslU homohexamer. The assembly of the HslU/HslV complex is dependent on binding of ATP.

It localises to the cytoplasm. Functionally, ATPase subunit of a proteasome-like degradation complex; this subunit has chaperone activity. The binding of ATP and its subsequent hydrolysis by HslU are essential for unfolding of protein substrates subsequently hydrolyzed by HslV. HslU recognizes the N-terminal part of its protein substrates and unfolds these before they are guided to HslV for hydrolysis. The chain is ATP-dependent protease ATPase subunit HslU from Xylella fastidiosa (strain M23).